The chain runs to 309 residues: Glycine--tRNA ligase alpha subunit (309 aa).

The protein belongs to the class-II aminoacyl-tRNA synthetase family. Tetramer of two alpha and two beta subunits.

It is found in the cytoplasm. The catalysed reaction is tRNA(Gly) + glycine + ATP = glycyl-tRNA(Gly) + AMP + diphosphate. This is Glycine--tRNA ligase alpha subunit from Anaeromyxobacter sp. (strain K).